A 185-amino-acid chain; its full sequence is Probable host range protein 2 (185 aa).

It belongs to the poxviridae C7 protein family.

Its function is as follows. Plays a role for multiplication of the virus in different cell types. The sequence is that of Probable host range protein 2 from Swinepox virus (strain Kasza) (SWPV).